Reading from the N-terminus, the 348-residue chain is UDP-N-acetylglucosamine--N-acetylmuramyl-(pentapeptide) pyrophosphoryl-undecaprenol N-acetylglucosamine transferase (348 aa).

UDP-N-acetyl-alpha-D-glucosamine contacts are provided by residues 11–13 (TGG), N120, R161, S187, and Q281.

This sequence belongs to the glycosyltransferase 28 family. MurG subfamily.

It localises to the cell inner membrane. It carries out the reaction di-trans,octa-cis-undecaprenyl diphospho-N-acetyl-alpha-D-muramoyl-L-alanyl-D-glutamyl-meso-2,6-diaminopimeloyl-D-alanyl-D-alanine + UDP-N-acetyl-alpha-D-glucosamine = di-trans,octa-cis-undecaprenyl diphospho-[N-acetyl-alpha-D-glucosaminyl-(1-&gt;4)]-N-acetyl-alpha-D-muramoyl-L-alanyl-D-glutamyl-meso-2,6-diaminopimeloyl-D-alanyl-D-alanine + UDP + H(+). It functions in the pathway cell wall biogenesis; peptidoglycan biosynthesis. Cell wall formation. Catalyzes the transfer of a GlcNAc subunit on undecaprenyl-pyrophosphoryl-MurNAc-pentapeptide (lipid intermediate I) to form undecaprenyl-pyrophosphoryl-MurNAc-(pentapeptide)GlcNAc (lipid intermediate II). The sequence is that of UDP-N-acetylglucosamine--N-acetylmuramyl-(pentapeptide) pyrophosphoryl-undecaprenol N-acetylglucosamine transferase from Crocosphaera subtropica (strain ATCC 51142 / BH68) (Cyanothece sp. (strain ATCC 51142)).